The chain runs to 206 residues: Large ribosomal subunit protein uL4 (206 aa).

It belongs to the universal ribosomal protein uL4 family. As to quaternary structure, part of the 50S ribosomal subunit.

One of the primary rRNA binding proteins, this protein initially binds near the 5'-end of the 23S rRNA. It is important during the early stages of 50S assembly. It makes multiple contacts with different domains of the 23S rRNA in the assembled 50S subunit and ribosome. Its function is as follows. Forms part of the polypeptide exit tunnel. The polypeptide is Large ribosomal subunit protein uL4 (Methylocella silvestris (strain DSM 15510 / CIP 108128 / LMG 27833 / NCIMB 13906 / BL2)).